Reading from the N-terminus, the 245-residue chain is Dehydrogenase/reductase SDR family member 6 (245 aa).

Residues 16-18, Asp37, and Asp58 contribute to the NAD(+) site; that span reads QGI. Arg144 lines the substrate pocket. Catalysis depends on Tyr147, which acts as the Proton acceptor. NAD(+)-binding positions include Lys151 and 180 to 184; that span reads VDTPS. 2 residues coordinate substrate: Arg188 and Arg205.

It belongs to the short-chain dehydrogenases/reductases (SDR) family. Homotetramer. In terms of tissue distribution, detected in liver, spleen and macrophages. Widely expressed.

It localises to the cytoplasm. It carries out the reaction cis-4-hydroxy-L-proline + NAD(+) = 4-oxo-L-proline + NADH + H(+). The enzyme catalyses (R)-3-hydroxybutanoate + NAD(+) = acetoacetate + NADH + H(+). The protein operates within amino-acid metabolism. Its pathway is siderophore biosynthesis. Functionally, NAD(H)-dependent dehydrogenase/reductase with a preference for cyclic substrates. Catalyzes stereoselective conversion of 4-oxo-L-proline to cis-4-hydroxy-L-proline, likely a detoxification mechanism for ketoprolines. Mediates the formation of 2,5-dihydroxybenzoate (2,5-DHBA), a siderophore that chelates free cytoplasmic iron and associates with LCN2, thereby regulating iron transport and homeostasis while protecting cells against free radical-induced oxidative stress. The iron-siderophore complex is imported into mitochondria, providing an iron source for mitochondrial metabolic processes in particular heme synthesis. May act as a 3-hydroxybutyrate dehydrogenase. In terms of biological role, (Microbial infection) May play a role in susceptibility to bacterial infection by providing an assimilable source of iron that is exploited by pathogenic bacteria. Host iron-siderophore complexes can be used by bacteria to promote their own growth and pathogenicity. The sequence is that of Dehydrogenase/reductase SDR family member 6 from Mus musculus (Mouse).